The chain runs to 475 residues: Arginine/ornithine antiporter (475 aa).

12 helical membrane passes run 10–30, 42–62, 74–94, 101–121, 157–177, 205–225, 238–258, 283–303, 333–353, 361–381, 397–417, and 451–471; these read IGLL…GVFG, GPVL…ALSL, GIFS…SGWG, LGNV…FPIF, LVTI…IVLF, NCMM…MLSA, ILGL…PYGY, WGGY…WLSW, PTFA…TLLF, AYSL…AYQI, LLIG…AGVS, and WLIT…VVSG.

It belongs to the amino acid-polyamine-organocation (APC) superfamily. Basic amino acid/polyamine antiporter (APA) (TC 2.A.3.2) family.

The protein resides in the cell membrane. The enzyme catalyses L-ornithine(in) + L-arginine(out) = L-ornithine(out) + L-arginine(in). Its function is as follows. Catalyzes electroneutral exchange between L-arginine and L-ornithine. The protein is Arginine/ornithine antiporter (arcD) of Latilactobacillus sakei (Lactobacillus sakei).